The following is a 342-amino-acid chain: Ferredoxin--NADP reductase (342 aa).

Positions 17, 36, 44, 49, 89, 124, 289, and 330 each coordinate FAD.

It belongs to the ferredoxin--NADP reductase type 2 family. Homodimer. FAD is required as a cofactor.

It catalyses the reaction 2 reduced [2Fe-2S]-[ferredoxin] + NADP(+) + H(+) = 2 oxidized [2Fe-2S]-[ferredoxin] + NADPH. The chain is Ferredoxin--NADP reductase from Bradyrhizobium diazoefficiens (strain JCM 10833 / BCRC 13528 / IAM 13628 / NBRC 14792 / USDA 110).